The following is a 36-amino-acid chain: Pancreatic polypeptide (36 aa).

Phe-36 is subject to Phenylalanine amide.

It belongs to the NPY family.

The protein resides in the secreted. In terms of biological role, hormone secreted by pancreatic cells that acts as a regulator of pancreatic and gastrointestinal functions. The chain is Pancreatic polypeptide (ppy) from Rana temporaria (European common frog).